The following is a 236-amino-acid chain: Uridylate kinase (236 aa).

Lysine 12–glycine 15 lines the ATP pocket. Residues glycine 20–glycine 25 form an involved in allosteric activation by GTP region. Glycine 54 contacts UMP. 2 residues coordinate ATP: glycine 55 and arginine 59. UMP contacts are provided by residues aspartate 72 and threonine 133–threonine 140. ATP is bound by residues asparagine 161, tyrosine 166, and aspartate 169.

This sequence belongs to the UMP kinase family. In terms of assembly, homohexamer.

The protein localises to the cytoplasm. It catalyses the reaction UMP + ATP = UDP + ADP. It functions in the pathway pyrimidine metabolism; CTP biosynthesis via de novo pathway; UDP from UMP (UMPK route): step 1/1. Its activity is regulated as follows. Allosterically activated by GTP. Inhibited by UTP. Its function is as follows. Catalyzes the reversible phosphorylation of UMP to UDP. The chain is Uridylate kinase from Alkaliphilus metalliredigens (strain QYMF).